The chain runs to 144 residues: 3-dehydroquinate dehydratase (144 aa).

Y24 (proton acceptor) is an active-site residue. Substrate-binding residues include N73, H79, and D86. The active-site Proton donor is H99. Residues 100–101 (LS) and R110 contribute to the substrate site.

The protein belongs to the type-II 3-dehydroquinase family. In terms of assembly, homododecamer.

It catalyses the reaction 3-dehydroquinate = 3-dehydroshikimate + H2O. Its pathway is metabolic intermediate biosynthesis; chorismate biosynthesis; chorismate from D-erythrose 4-phosphate and phosphoenolpyruvate: step 3/7. Catalyzes a trans-dehydration via an enolate intermediate. The chain is 3-dehydroquinate dehydratase from Shewanella sp. (strain ANA-3).